The following is a 266-amino-acid chain: Undecaprenyl-diphosphatase (266 aa).

The next 8 helical transmembrane spans lie at 1–21 (MDTFQVIILALIQGLTEFLPI), 39–59 (QGLSFDVAVNTGSLFAVVIYF), 87–107 (WWIILATLPAVFFGFIAKDFI), 111–131 (LRSAGVIAVTTIVFGLLLWWA), 149–169 (ALLIGFAQALALIPGTSRSGA), 183–203 (AAARFSFLMSVPVSLGAAILV), 218–238 (ALTLGTVISFVAAYLCIHYFL), and 246–266 (MTPFVIYRLILGAVLCGFIFL).

It belongs to the UppP family.

The protein localises to the cell inner membrane. The enzyme catalyses di-trans,octa-cis-undecaprenyl diphosphate + H2O = di-trans,octa-cis-undecaprenyl phosphate + phosphate + H(+). Catalyzes the dephosphorylation of undecaprenyl diphosphate (UPP). Confers resistance to bacitracin. This chain is Undecaprenyl-diphosphatase, found in Shewanella sp. (strain MR-7).